A 37-amino-acid polypeptide reads, in one-letter code: Potassium channel toxin alpha-KTx 1.13 (37 aa).

Position 1 is a pyrrolidone carboxylic acid (glutamine 1). 3 disulfides stabilise this stretch: cysteine 7-cysteine 28, cysteine 13-cysteine 33, and cysteine 17-cysteine 35. Positions 26 to 33 are interaction with Ca(2+)-activated K(+) channels; that stretch reads GKCMNKKC.

This sequence belongs to the short scorpion toxin superfamily. Potassium channel inhibitor family. Alpha-KTx 01 subfamily. Expressed by the venom gland.

The protein localises to the secreted. In terms of biological role, potent selective inhibitor of high conductance (maxi-K), different medium and small conductance calcium-activated potassium channels (KCa1.1/KCNMA1 and others), as well as a voltage-dependent potassium channel (Kv1.3/KCNA3&gt;Kv1.2/KCNA2&gt;Kv1.6/KCNA3&gt;&gt;Shaker/Sh). It blocks channel activity by a simple bimolecular inhibition process. Its function is as follows. Has a pH-specific antimicrobial activity against bacteria (B.subtilis, E.coli and S.aureus) and the fungus C.albicans. The polypeptide is Potassium channel toxin alpha-KTx 1.13 (Leiurus hebraeus (Hebrew deathstalker scorpion)).